Consider the following 392-residue polypeptide: Succinate--CoA ligase [ADP-forming] subunit beta (392 aa).

Residues 9–244 enclose the ATP-grasp domain; the sequence is KALLAQYGVG…LSEEESSEIE (236 aa). ATP-binding positions include lysine 46, 53–55, glutamate 99, leucine 102, and glutamate 107; that span reads GRG. Residues asparagine 199 and aspartate 213 each contribute to the Mg(2+) site. Substrate contacts are provided by residues asparagine 264 and 321-323; that span reads GIV.

Belongs to the succinate/malate CoA ligase beta subunit family. Heterotetramer of two alpha and two beta subunits. Requires Mg(2+) as cofactor.

The enzyme catalyses succinate + ATP + CoA = succinyl-CoA + ADP + phosphate. It catalyses the reaction GTP + succinate + CoA = succinyl-CoA + GDP + phosphate. It functions in the pathway carbohydrate metabolism; tricarboxylic acid cycle; succinate from succinyl-CoA (ligase route): step 1/1. Functionally, succinyl-CoA synthetase functions in the citric acid cycle (TCA), coupling the hydrolysis of succinyl-CoA to the synthesis of either ATP or GTP and thus represents the only step of substrate-level phosphorylation in the TCA. The beta subunit provides nucleotide specificity of the enzyme and binds the substrate succinate, while the binding sites for coenzyme A and phosphate are found in the alpha subunit. In Wolinella succinogenes (strain ATCC 29543 / DSM 1740 / CCUG 13145 / JCM 31913 / LMG 7466 / NCTC 11488 / FDC 602W) (Vibrio succinogenes), this protein is Succinate--CoA ligase [ADP-forming] subunit beta.